Here is a 490-residue protein sequence, read N- to C-terminus: Betaine aldehyde dehydrogenase (490 aa).

3 residues coordinate K(+): threonine 26, isoleucine 27, and aspartate 93. Glycine 150–tryptophan 152 is a binding site for NAD(+). The active-site Charge relay system is the lysine 162. Lysine 176–glutamate 179 is an NAD(+) binding site. Valine 180 lines the K(+) pocket. Glycine 230–serine 233 is an NAD(+) binding site. Residue leucine 246 participates in K(+) binding. Glutamate 252 (proton acceptor) is an active-site residue. Residues glycine 254, cysteine 286, and glutamate 387 each contribute to the NAD(+) site. Cysteine 286 serves as the catalytic Nucleophile. At cysteine 286 the chain carries Cysteine sulfenic acid (-SOH). The K(+) site is built by lysine 457 and glycine 460. Glutamate 464 functions as the Charge relay system in the catalytic mechanism.

Belongs to the aldehyde dehydrogenase family. As to quaternary structure, dimer of dimers. The cofactor is K(+).

The catalysed reaction is betaine aldehyde + NAD(+) + H2O = glycine betaine + NADH + 2 H(+). It functions in the pathway amine and polyamine biosynthesis; betaine biosynthesis via choline pathway; betaine from betaine aldehyde: step 1/1. Functionally, involved in the biosynthesis of the osmoprotectant glycine betaine. Catalyzes the irreversible oxidation of betaine aldehyde to the corresponding acid. This is Betaine aldehyde dehydrogenase from Escherichia coli (strain 55989 / EAEC).